Consider the following 152-residue polypeptide: Arginine repressor (152 aa).

It belongs to the ArgR family.

Its subcellular location is the cytoplasm. It participates in amino-acid biosynthesis; L-arginine biosynthesis [regulation]. Regulates arginine biosynthesis genes. This chain is Arginine repressor, found in Lactococcus lactis subsp. cremoris (strain MG1363).